The sequence spans 305 residues: Probable cell division protein WhiA (305 aa).

The segment at residues 269-302 is a DNA-binding region (H-T-H motif); that stretch reads TIKELGELLEPSLGKSGVNHRLRKLVEQANELRK.

Belongs to the WhiA family.

Its function is as follows. Involved in cell division and chromosome segregation. This chain is Probable cell division protein WhiA, found in Lactococcus lactis subsp. lactis (strain IL1403) (Streptococcus lactis).